We begin with the raw amino-acid sequence, 635 residues long: Threonine--tRNA ligase (635 aa).

Positions 1-61 (MIKITLKDGK…HKDSSLEILT (61 aa)) constitute a TGS domain. Residues 242–532 (DHRKLGKELD…LIEQYAGAFP (291 aa)) are catalytic. Zn(2+) is bound by residues cysteine 333, histidine 384, and histidine 509.

This sequence belongs to the class-II aminoacyl-tRNA synthetase family. In terms of assembly, homodimer. Requires Zn(2+) as cofactor.

It localises to the cytoplasm. It carries out the reaction tRNA(Thr) + L-threonine + ATP = L-threonyl-tRNA(Thr) + AMP + diphosphate + H(+). In terms of biological role, catalyzes the attachment of threonine to tRNA(Thr) in a two-step reaction: L-threonine is first activated by ATP to form Thr-AMP and then transferred to the acceptor end of tRNA(Thr). Also edits incorrectly charged L-seryl-tRNA(Thr). The polypeptide is Threonine--tRNA ligase (Clostridium botulinum (strain ATCC 19397 / Type A)).